A 493-amino-acid chain; its full sequence is MAMSNTSALASKLLPSCKPHQPTLTFFSPSTTCQKKPRSSRPISAAVHVTQPPKTPISSATATKRRLSLLNGVWESWKSKKALQLPEYPDEGKLDGVLKTIEAFPPLVFAGEARSLEEKLAQAAMGNAFLLQGGDCAESFKELMPLYSRYFQNTASDECRLTFGGQCPVIKVGRMAGQFAKPRLDPFEEKDGLWLSGANGWPVAWEAYCKLQQLSPSRALLLVVCCYAESHPMDLDFVEHSEQGDRYQELAHRVDEALGFMDACGLTVDHPIMATTEFWTSHECLLLPYEQALTREDSTSGLFYDCSAHMLWVGERTRQLDGAHVEFLRGVANPLGIKVSQKMDPNELVNLIEILNPTNKPGRITVIVRMGAENMRVKLPHLIRAVRGAGQIVTWVCDPMHGNTIKAPCGLKTRAFDAILAEVRAFYDVHEQEGTLPGTECVGGSRTITYDDRQTRYHTHCDPRLNASQSLELAFIIAERLRKEESVLNAHSP.

Residues 1–58 (MAMSNTSALASKLLPSCKPHQPTLTFFSPSTTCQKKPRSSRPISAAVHVTQPPKTPIS) constitute a chloroplast transit peptide.

It belongs to the class-II DAHP synthase family.

The protein localises to the plastid. Its subcellular location is the chloroplast. The enzyme catalyses D-erythrose 4-phosphate + phosphoenolpyruvate + H2O = 7-phospho-2-dehydro-3-deoxy-D-arabino-heptonate + phosphate. It functions in the pathway metabolic intermediate biosynthesis; chorismate biosynthesis; chorismate from D-erythrose 4-phosphate and phosphoenolpyruvate: step 1/7. The sequence is that of Probable phospho-2-dehydro-3-deoxyheptonate aldolase, chloroplastic (DHS1) from Catharanthus roseus (Madagascar periwinkle).